A 163-amino-acid chain; its full sequence is Calmodulin (163 aa).

At Ala-2 the chain carries N-acetylalanine. EF-hand domains follow at residues 11–46, 47–82, 84–119, and 120–155; these read EQIA…LGQN, PTEA…KMKE, DHED…LGEK, and LSEE…GATD. Ca(2+)-binding residues include Asp-24, Asp-26, Asp-28, Thr-30, Glu-35, Asp-60, Asp-62, Asn-64, Thr-66, Glu-71, Asp-97, Asp-99, Asn-101, Glu-108, Asp-133, Asp-135, Asp-137, Gln-139, and Glu-144.

This sequence belongs to the calmodulin family. Associates with the spoke-associated complex containing CFAP61, CFAP91 and CFAP251; the association is calcium sensitive. Trimethylation of Lys-119 observed in other calmodulins is absent here.

It is found in the cytoplasm. Its subcellular location is the cytoskeleton. It localises to the flagellum axoneme. Calmodulin mediates the control of a large number of enzymes, ion channels and other proteins by Ca(2+). Among the enzymes to be stimulated by the calmodulin-Ca(2+) complex are a number of protein kinases and phosphatases. In Chlamydomonas reinhardtii (Chlamydomonas smithii), this protein is Calmodulin.